The following is a 374-amino-acid chain: Queuine tRNA-ribosyltransferase (374 aa).

Catalysis depends on D91, which acts as the Proton acceptor. Residues 91 to 95 (DSGGY), D145, Q189, and G216 each bind substrate. Residues 247–253 (GVGTVPD) form an RNA binding region. D266 acts as the Nucleophile in catalysis. The tract at residues 271–275 (TRNAR) is RNA binding; important for wobble base 34 recognition. Positions 304, 306, 309, and 335 each coordinate Zn(2+).

The protein belongs to the queuine tRNA-ribosyltransferase family. As to quaternary structure, homodimer. Within each dimer, one monomer is responsible for RNA recognition and catalysis, while the other monomer binds to the replacement base PreQ1. Zn(2+) is required as a cofactor.

The catalysed reaction is 7-aminomethyl-7-carbaguanine + guanosine(34) in tRNA = 7-aminomethyl-7-carbaguanosine(34) in tRNA + guanine. It participates in tRNA modification; tRNA-queuosine biosynthesis. Its function is as follows. Catalyzes the base-exchange of a guanine (G) residue with the queuine precursor 7-aminomethyl-7-deazaguanine (PreQ1) at position 34 (anticodon wobble position) in tRNAs with GU(N) anticodons (tRNA-Asp, -Asn, -His and -Tyr). Catalysis occurs through a double-displacement mechanism. The nucleophile active site attacks the C1' of nucleotide 34 to detach the guanine base from the RNA, forming a covalent enzyme-RNA intermediate. The proton acceptor active site deprotonates the incoming PreQ1, allowing a nucleophilic attack on the C1' of the ribose to form the product. After dissociation, two additional enzymatic reactions on the tRNA convert PreQ1 to queuine (Q), resulting in the hypermodified nucleoside queuosine (7-(((4,5-cis-dihydroxy-2-cyclopenten-1-yl)amino)methyl)-7-deazaguanosine). This chain is Queuine tRNA-ribosyltransferase, found in Leptospira borgpetersenii serovar Hardjo-bovis (strain JB197).